Consider the following 263-residue polypeptide: Hydroxyethylthiazole kinase 1 (263 aa).

M42 provides a ligand contact to substrate. 2 residues coordinate ATP: K118 and T164. Substrate is bound at residue G191.

Belongs to the Thz kinase family. Requires Mg(2+) as cofactor.

The enzyme catalyses 5-(2-hydroxyethyl)-4-methylthiazole + ATP = 4-methyl-5-(2-phosphooxyethyl)-thiazole + ADP + H(+). It participates in cofactor biosynthesis; thiamine diphosphate biosynthesis; 4-methyl-5-(2-phosphoethyl)-thiazole from 5-(2-hydroxyethyl)-4-methylthiazole: step 1/1. In terms of biological role, catalyzes the phosphorylation of the hydroxyl group of 4-methyl-5-beta-hydroxyethylthiazole (THZ). This chain is Hydroxyethylthiazole kinase 1, found in Clostridium botulinum (strain ATCC 19397 / Type A).